We begin with the raw amino-acid sequence, 113 residues long: U11-theraphotoxin-Hhn1a (113 aa).

Positions 1-21 are cleaved as a signal peptide; sequence MNTVRVTFLLVFVLAVSLGQA. Positions 22–74 are excised as a propeptide; sequence DKDENRMEMQEKTEQGKSYLDFAENLLLQKLEELEAKPLEEDSEESRNSRQKR. The span at 57–69 shows a compositional bias: basic and acidic residues; that stretch reads AKPLEEDSEESRN. The disordered stretch occupies residues 57 to 83; it reads AKPLEEDSEESRNSRQKRCIGEGVPCD. Intrachain disulfides connect cysteine 75-cysteine 90, cysteine 82-cysteine 95, and cysteine 89-cysteine 110.

This sequence belongs to the neurotoxin 14 (magi-1) family. 01 (HNTX-16) subfamily. As to expression, expressed by the venom gland.

Its subcellular location is the secreted. In terms of biological role, probable ion channel inhibitor. The polypeptide is U11-theraphotoxin-Hhn1a (Cyriopagopus hainanus (Chinese bird spider)).